A 120-amino-acid chain; its full sequence is NAD(P)H-quinone oxidoreductase subunit 3, chloroplastic (120 aa).

The next 3 helical transmembrane spans lie at 9–29 (IFWT…WISG), 64–84 (MFAL…PWAM), and 88–108 (VLGV…VVGL).

The protein belongs to the complex I subunit 3 family. As to quaternary structure, NDH is composed of at least 16 different subunits, 5 of which are encoded in the nucleus.

It is found in the plastid. The protein resides in the chloroplast thylakoid membrane. It carries out the reaction a plastoquinone + NADH + (n+1) H(+)(in) = a plastoquinol + NAD(+) + n H(+)(out). The catalysed reaction is a plastoquinone + NADPH + (n+1) H(+)(in) = a plastoquinol + NADP(+) + n H(+)(out). Its function is as follows. NDH shuttles electrons from NAD(P)H:plastoquinone, via FMN and iron-sulfur (Fe-S) centers, to quinones in the photosynthetic chain and possibly in a chloroplast respiratory chain. The immediate electron acceptor for the enzyme in this species is believed to be plastoquinone. Couples the redox reaction to proton translocation, and thus conserves the redox energy in a proton gradient. The sequence is that of NAD(P)H-quinone oxidoreductase subunit 3, chloroplastic from Zea mays (Maize).